Reading from the N-terminus, the 1698-residue chain is Bromodomain adjacent to zinc finger domain protein 2A (1698 aa).

Disordered regions lie at residues 240-262 (QSTP…QLPS) and 352-387 (VMQE…MTIE). Over residues 377–387 (ENVSQDEMTIE) the composition is skewed to polar residues. Positions 418–489 (IATPEQVCFP…EHFSFSPRMP (72 aa)) constitute an MBD domain. Disordered regions lie at residues 524–550 (RGRP…PPKV) and 610–653 (EKEE…DRKL). The span at 528–540 (RNLEKAKAKEQKA) shows a compositional bias: basic and acidic residues. The segment at residues 541-553 (KRGRGRPPKVKMI) is a DNA-binding region (a.T hook 1). A coiled-coil region spans residues 579–638 (VQLCKLKKKMRRKARNQEAKLEAAKKLKEIKEKEEKKQKIQKAKNQEKAKNQEKKRTRRQ). Over residues 610-632 (EKEEKKQKIQKAKNQEKAKNQEK) the composition is skewed to basic and acidic residues. Residues 701 to 766 (SCAFSDCLTT…LQAAMINPGL (66 aa)) enclose the DDT domain. Disordered stretches follow at residues 884-905 (ITTT…NDEL), 1013-1063 (SFGS…PLTN), 1088-1110 (TVLT…SEAT), and 1123-1149 (TPCR…TAAT). The span at 890–900 (SLRRRSERNAE) shows a compositional bias: basic and acidic residues. 2 stretches are compositionally biased toward polar residues: residues 1023 to 1040 (HPRN…SCHC) and 1051 to 1063 (VTDQ…PLTN). Positions 1091 to 1108 (TPESSPPHSESTPIISSE) are enriched in low complexity. Over residues 1124-1149 (PCRNHNQGLSTHSSNRLSPPSPTAAT) the composition is skewed to polar residues. The segment at residues 1204 to 1216 (EKRRGRRPSKLLK) is a DNA-binding region (a.T hook 3). A PHD-type zinc finger spans residues 1476-1526 (KVTCLYCRKGDNDELLLLCDSCDRGCHTYCHRPRMNEIPEGDWFCPTCISL). The segment at 1549-1587 (FTEDSPSKPSRRREHPTASQFSPGESPASKKRRMGTRSQ) is disordered. Residues 1585-1689 (RSQSPDLTFC…KFYDARWEEF (105 aa)) enclose the Bromo domain.

The protein belongs to the WAL family. Component of the NoRC complex, at least composed of SMARCA5/SNF2H and BAZ2A/TIP5.

The protein localises to the nucleus. Its subcellular location is the nucleolus. Essential component of the NoRC (nucleolar remodeling complex) complex, a complex that mediates silencing of a fraction of rDNA by recruiting histone-modifying enzymes and DNA methyltransferases, leading to heterochromatin formation and transcriptional silencing. In the complex, it plays a central role by being recruited to rDNA and by targeting chromatin modifying enzymes such as HDAC1, leading to repress RNA polymerase I transcription. Recruited to rDNA via its interaction with TTF1 and its ability to recognize and bind histone H4 acetylated on 'Lys-16' (H4K16ac), leading to deacetylation of H4K5ac, H4K8ac, H4K12ac but not H4K16ac. Specifically binds pRNAs, 150-250 nucleotide RNAs that are complementary in sequence to the rDNA promoter; pRNA-binding is required for heterochromatin formation and rDNA silencing. The sequence is that of Bromodomain adjacent to zinc finger domain protein 2A (baz2a) from Xenopus laevis (African clawed frog).